We begin with the raw amino-acid sequence, 116 residues long: uncharacterized protein (116 aa).

This is an uncharacterized protein from Archaeoglobus fulgidus (strain ATCC 49558 / DSM 4304 / JCM 9628 / NBRC 100126 / VC-16).